The primary structure comprises 337 residues: Glucan endo-1,3-beta-glucosidase, basic isoform 1 (337 aa).

The Proton donor role is filled by Glu94. Residue Glu239 is the Nucleophile of the active site. The propeptide at 315–337 (VSERVWDISAETNSTASSLISEM) is removed in mature form. A glycan (N-linked (GlcNAc...) asparagine) is linked at Asn327.

The protein belongs to the glycosyl hydrolase 17 family.

The protein resides in the vacuole. It catalyses the reaction Hydrolysis of (1-&gt;3)-beta-D-glucosidic linkages in (1-&gt;3)-beta-D-glucans.. In terms of biological role, is thought to be an important plant defense-related product against fungal pathogens. The sequence is that of Glucan endo-1,3-beta-glucosidase, basic isoform 1 (GLUB1) from Solanum tuberosum (Potato).